A 1034-amino-acid chain; its full sequence is Ice nucleation protein InaU (1034 aa).

Residues 162–993 (ATYGSTLSGT…LTAGENSVLI (832 aa)) are octapeptide periodicity. Disordered regions lie at residues 260–287 (YGST…KGSD), 311–342 (TQTA…GYGS), 356–383 (YGST…KGSD), 407–438 (TQTA…GYGS), 452–480 (YGST…GSDL), and 570–597 (AREG…TGYG). Composition is skewed to polar residues over residues 261 to 286 (GSTQ…QKGS), 311 to 334 (TQTA…QKGS), 357 to 382 (GSTQ…QKGS), 407 to 430 (TQTA…QKGS), 453 to 480 (GSTQ…GSDL), and 580 to 592 (YGST…NSDL).

Belongs to the bacterial ice nucleation protein family.

It is found in the cell outer membrane. Its function is as follows. Ice nucleation proteins enable bacteria to nucleate crystallization in supercooled water. The chain is Ice nucleation protein InaU (inaU) from Pantoea ananas (Erwinia uredovora).